The chain runs to 445 residues: Exodeoxyribonuclease 7 large subunit (445 aa).

The protein belongs to the XseA family. As to quaternary structure, heterooligomer composed of large and small subunits.

The protein resides in the cytoplasm. It carries out the reaction Exonucleolytic cleavage in either 5'- to 3'- or 3'- to 5'-direction to yield nucleoside 5'-phosphates.. Functionally, bidirectionally degrades single-stranded DNA into large acid-insoluble oligonucleotides, which are then degraded further into small acid-soluble oligonucleotides. The sequence is that of Exodeoxyribonuclease 7 large subunit from Staphylococcus epidermidis (strain ATCC 35984 / DSM 28319 / BCRC 17069 / CCUG 31568 / BM 3577 / RP62A).